The following is a 390-amino-acid chain: cAMP-dependent protein kinase regulatory subunit (390 aa).

The span at 1–17 shows a compositional bias: polar residues; the sequence is MSASGFTSPFGANSNPF. Positions 1-81 are disordered; that stretch reads MSASGFTSPF…RPQNPDGYPA (81 aa). Positions 1-129 are dimerization and phosphorylation; sequence MSASGFTSPF…RLKKAIQGNF (129 aa). Ser-90 is subject to Phosphoserine. 3',5'-cyclic AMP-binding positions include 130–261, Glu-208, Arg-217, 262–383, Glu-329, and Arg-338; these read LFSH…EEVP and ILST…GVEE.

The protein belongs to the cAMP-dependent kinase regulatory chain family. As to quaternary structure, tetramer, composed of 2 regulatory (R) and 2 catalytic (C) subunits. In the presence of cAMP it dissociates into 2 active monomeric C subunits and an R dimer.

This chain is cAMP-dependent protein kinase regulatory subunit (SUM1), found in Pyricularia oryzae (strain 70-15 / ATCC MYA-4617 / FGSC 8958) (Rice blast fungus).